The following is a 376-amino-acid chain: Dual-specificity RNA methyltransferase RlmN (376 aa).

Glutamate 96 acts as the Proton acceptor in catalysis. The region spanning 102-341 (DEDRATLCVS…VVVRKTRGDD (240 aa)) is the Radical SAM core domain. A disulfide bridge connects residues cysteine 109 and cysteine 346. Positions 116, 120, and 123 each coordinate [4Fe-4S] cluster. S-adenosyl-L-methionine is bound by residues 170 to 171 (GE), serine 202, 224 to 226 (SLH), and asparagine 303. The S-methylcysteine intermediate role is filled by cysteine 346.

The protein belongs to the radical SAM superfamily. RlmN family. [4Fe-4S] cluster serves as cofactor.

The protein resides in the cytoplasm. It carries out the reaction adenosine(2503) in 23S rRNA + 2 reduced [2Fe-2S]-[ferredoxin] + 2 S-adenosyl-L-methionine = 2-methyladenosine(2503) in 23S rRNA + 5'-deoxyadenosine + L-methionine + 2 oxidized [2Fe-2S]-[ferredoxin] + S-adenosyl-L-homocysteine. The catalysed reaction is adenosine(37) in tRNA + 2 reduced [2Fe-2S]-[ferredoxin] + 2 S-adenosyl-L-methionine = 2-methyladenosine(37) in tRNA + 5'-deoxyadenosine + L-methionine + 2 oxidized [2Fe-2S]-[ferredoxin] + S-adenosyl-L-homocysteine. Its function is as follows. Specifically methylates position 2 of adenine 2503 in 23S rRNA and position 2 of adenine 37 in tRNAs. m2A2503 modification seems to play a crucial role in the proofreading step occurring at the peptidyl transferase center and thus would serve to optimize ribosomal fidelity. The chain is Dual-specificity RNA methyltransferase RlmN from Pseudoalteromonas atlantica (strain T6c / ATCC BAA-1087).